The sequence spans 191 residues: Prostaglandin-H2 D-isomerase (191 aa).

A signal peptide spans 1-28; the sequence is MATPNRLWMALLLLGVLGVLQTPAPAQA. N-linked (GlcNAc...) asparagine glycosylation occurs at Asn-51. Catalysis depends on Cys-65, which acts as the Nucleophile. N-linked (GlcNAc...) asparagine glycosylation occurs at Asn-78. Cys-89 and Cys-186 are disulfide-bonded.

The protein belongs to the calycin superfamily. Lipocalin family. As to quaternary structure, monomer. In terms of tissue distribution, in the male reproductive system, expressed in the testis, epididymis and prostate, and secreted into the seminal fluid.

The protein localises to the rough endoplasmic reticulum. It is found in the nucleus membrane. The protein resides in the golgi apparatus. Its subcellular location is the cytoplasm. It localises to the perinuclear region. The protein localises to the secreted. It catalyses the reaction prostaglandin H2 = prostaglandin D2. In terms of biological role, catalyzes the conversion of PGH2 to PGD2, a prostaglandin involved in smooth muscle contraction/relaxation and a potent inhibitor of platelet aggregation. Involved in a variety of CNS functions, such as sedation, NREM sleep and PGE2-induced allodynia, and may have an anti-apoptotic role in oligodendrocytes. Binds small non-substrate lipophilic molecules, including biliverdin, bilirubin, retinal, retinoic acid and thyroid hormone, and may act as a scavenger for harmful hydrophobic molecules and as a secretory retinoid and thyroid hormone transporter. Possibly involved in development and maintenance of the blood-brain, blood-retina, blood-aqueous humor and blood-testis barrier. It is likely to play important roles in both maturation and maintenance of the central nervous system and male reproductive system. Involved in PLA2G3-dependent maturation of mast cells. PLA2G3 is secreted by immature mast cells and acts on nearby fibroblasts upstream to PTDGS to synthesize PGD2, which in turn promotes mast cell maturation and degranulation via PTGDR. In Bos taurus (Bovine), this protein is Prostaglandin-H2 D-isomerase (PTGDS).